The chain runs to 372 residues: N-methyl-L-tryptophan oxidase (372 aa).

4-34 (DLIIIGSGSVGAAAGYYATRAGLKVLMTDAH) serves as a coordination point for FAD. Cys-307 is modified (S-8alpha-FAD cysteine).

The protein belongs to the MSOX/MTOX family. MTOX subfamily. As to quaternary structure, monomer. The cofactor is FAD.

It catalyses the reaction N(alpha)-methyl-L-tryptophan + O2 + H2O = L-tryptophan + formaldehyde + H2O2. In terms of biological role, catalyzes the oxidative demethylation of N-methyl-L-tryptophan. The chain is N-methyl-L-tryptophan oxidase from Salmonella arizonae (strain ATCC BAA-731 / CDC346-86 / RSK2980).